The primary structure comprises 175 residues: tRNA-acetylating toxin 3 (175 aa).

Residues L95, V97, G103, G105, G107, A108, D133, Q138, D141, and W142 each contribute to the acetyl-CoA site. Residue Y143 is part of the active site. 2 residues coordinate acetyl-CoA: G145 and F146.

It belongs to the acetyltransferase family. GNAT subfamily. As to quaternary structure, homodimer (in absence of antitoxin); has a condensed and elongated form. Forms a complex with cognate antitoxin TacA3. Forms a 4:2 antitoxin:toxin complex with cognate antitoxin TacA3. Forms a 4:4 antitoxin:toxin complex with promoter DNA, where 2 TacT3 dimers bridge 2 TacA3 dimers. Only TacA3 contacts promoter DNA in the octomeric form. TacT3 may contact DNA in the hexameric form.

The catalysed reaction is glycyl-tRNA(Gly) + acetyl-CoA = N-acetylglycyl-tRNA(Gly) + CoA + H(+). In terms of biological role, toxic component of a type II toxin-antitoxin (TA) system. Acetylates tRNA and inhibits translation. Acetylates only Gly-tRNA on all 3 Gly-tRNA(Gly) isoacceptors in situ. In vitro acetylates mainly Ile/Leu and Gly. Overexpression during the lag phase of a tacA3-tacT3 deletion strain leads to a 150-fold increase in persister cells in the presence of cefotaxime and a non-growth state in the absence of antibiotic. Persister cell formation and the growth defect are neutralized by cognate antitoxin TacA3, but not by TacA1 or TacA2. Plays a role in persister cell formation. Its function is as follows. The TacA3-TacT3 complex both represses and derepresses expression of its own operon. The hexameric 4:2 TacA3-TacT3 complex binds promoter DNA and represses its transcription; both subunits are required. The octomeric 4:4 TacA3-TacT3 complex derepresses the operon. The shift from hexameric to octomeric complex probably alters DNA-binding, leading to dissociation from the operator DNA and derepression. In Salmonella typhimurium (strain 14028s / SGSC 2262), this protein is tRNA-acetylating toxin 3.